The primary structure comprises 247 residues: MSGHNKWSTIKHKKGAADAKRGKVFTKIIKEITVAAKLGGGDPDGNPRLRTAIDKAKGENMPKDNVERAIKKGVGGLEGTTYEETTYEGYGPGGTAVLVEVMTDNRNRTVSDVRSIFTKCNGNMGESGCVSWLFDKKGLLVFPKSIDFDKLFEASIEAGADDVTDEDEQYEVLTDPAAFHQVKTALEGAGFKAESAEITMIPQTMVKLEGKNAENMLKLMDRMEDNDDVQNVYANFDISEEEMEKMM.

It belongs to the TACO1 family.

Its subcellular location is the cytoplasm. The chain is Probable transcriptional regulatory protein Gbem_3313 from Citrifermentans bemidjiense (strain ATCC BAA-1014 / DSM 16622 / JCM 12645 / Bem) (Geobacter bemidjiensis).